The sequence spans 176 residues: HTH-type transcriptional regulator DctR (176 aa).

One can recognise an HTH luxR-type domain in the interval 109-174 (VPEAAVSLSR…ELVRHQHIDY (66 aa)). The H-T-H motif DNA-binding region spans 133-152 (TEDILEKLKISLKTFYCHKH).

In terms of biological role, may act as a transcriptional regulator of dctA. In Escherichia coli (strain K12), this protein is HTH-type transcriptional regulator DctR (dctR).